The sequence spans 268 residues: Tryptophan synthase alpha chain (268 aa).

Residues Glu-49 and Asp-60 each act as proton acceptor in the active site.

Belongs to the TrpA family. As to quaternary structure, tetramer of two alpha and two beta chains.

It carries out the reaction (1S,2R)-1-C-(indol-3-yl)glycerol 3-phosphate + L-serine = D-glyceraldehyde 3-phosphate + L-tryptophan + H2O. It functions in the pathway amino-acid biosynthesis; L-tryptophan biosynthesis; L-tryptophan from chorismate: step 5/5. The alpha subunit is responsible for the aldol cleavage of indoleglycerol phosphate to indole and glyceraldehyde 3-phosphate. The polypeptide is Tryptophan synthase alpha chain (Salmonella choleraesuis (strain SC-B67)).